The following is a 509-amino-acid chain: Coiled-coil domain-containing protein 181 (509 aa).

Disordered regions lie at residues I27–E122 and L287–K368. Composition is skewed to basic and acidic residues over residues A41–E58 and D67–D82. A compositionally biased stretch (polar residues) spans R319–C333. Coiled coils occupy residues S335 to A377 and L418 to Q488. The span at R337–K368 shows a compositional bias: basic and acidic residues.

Belongs to the CCDC181 family. In terms of assembly, homodimer. Interacts with HOOK1. Interacts with HOOK2. Interacts with HOOK3.

The protein localises to the cytoplasm. It localises to the cytoskeleton. Its subcellular location is the cell projection. It is found in the cilium. The protein resides in the flagellum. In terms of biological role, microtubule-binding protein that localizes to the microtubular manchette of elongating spermatids. The sequence is that of Coiled-coil domain-containing protein 181 from Rattus norvegicus (Rat).